Reading from the N-terminus, the 832-residue chain is Protein P (832 aa).

The interval 1–177 is terminal protein domain (TP); sequence MPLSYQHFRR…FCGSPYSWEQ (177 aa). A spacer region spans residues 178-335; it reads ELQHGAESFH…YCLSHIVNLL (158 aa). A disordered region spans residues 186-229; it reads FHQQSSGILSRPPVGSSLQSKHSKSRLGLQSQQGHLARRQQGRS. Residues 336–679 are polymerase/reverse transcriptase domain (RT); the sequence is EDWGPCAEHG…YLNLYPVARQ (344 aa). Residues 346 to 589 enclose the Reverse transcriptase domain; sequence EHHIRTPRTP…YSLNFMGYVI (244 aa). Residues aspartate 418, aspartate 540, and aspartate 541 each contribute to the Mg(2+) site.

Belongs to the hepadnaviridae P protein family.

It carries out the reaction DNA(n) + a 2'-deoxyribonucleoside 5'-triphosphate = DNA(n+1) + diphosphate. It catalyses the reaction Endonucleolytic cleavage to 5'-phosphomonoester.. With respect to regulation, activated by host HSP70 and HSP40 in vitro to be able to bind the epsilon loop of the pgRNA. Because deletion of the RNase H region renders the protein partly chaperone-independent, the chaperones may be needed indirectly to relieve occlusion of the RNA-binding site by this domain. Inhibited by several reverse-transcriptase inhibitors: Lamivudine, Adefovir and Entecavir. In terms of biological role, multifunctional enzyme that converts the viral RNA genome into dsDNA in viral cytoplasmic capsids. This enzyme displays a DNA polymerase activity that can copy either DNA or RNA templates, and a ribonuclease H (RNase H) activity that cleaves the RNA strand of RNA-DNA heteroduplexes in a partially processive 3'- to 5'-endonucleasic mode. Neo-synthesized pregenomic RNA (pgRNA) are encapsidated together with the P protein, and reverse-transcribed inside the nucleocapsid. Initiation of reverse-transcription occurs first by binding the epsilon loop on the pgRNA genome, and is initiated by protein priming, thereby the 5'-end of (-)DNA is covalently linked to P protein. Partial (+)DNA is synthesized from the (-)DNA template and generates the relaxed circular DNA (RC-DNA) genome. After budding and infection, the RC-DNA migrates in the nucleus, and is converted into a plasmid-like covalently closed circular DNA (cccDNA). The activity of P protein does not seem to be necessary for cccDNA generation, and is presumably released from (+)DNA by host nuclear DNA repair machinery. The chain is Protein P from Hepatitis B virus genotype D (isolate Germany/1-91/1991) (HBV-D).